The chain runs to 115 residues: Cholecystokinin (115 aa).

The first 20 residues, 1–20 (MNSGVCLCVLMAVLAAGALT), serve as a signal peptide directing secretion. Residues 21-44 (QPVPPADPAGSGLQRAEEAPRRQL) constitute a propeptide that is removed on maturation. Residues 23–52 (VPPADPAGSGLQRAEEAPRRQLRVSQRTDG) are disordered. S31 carries an O-linked (Xyl...) (chondroitin sulfate) serine glycan. Y97 is subject to Sulfotyrosine. At F103 the chain carries Phenylalanine amide. A propeptide spanning residues 107 to 115 (SAEEYEYPS) is cleaved from the precursor. 2 positions are modified to sulfotyrosine: Y111 and Y113.

This sequence belongs to the gastrin/cholecystokinin family. In terms of assembly, binds to CCK-A receptors in the pancreas and CCK-B receptors in the brain. In terms of processing, the precursor is cleaved by proteases to produce a number of active cholecystokinins. Post-translationally, the precursor is cleaved by ACE, which removes the Gly-Arg-Arg peptide at the C-terminus, leading to mature hormone. Detected in cerebrospinal fluid and urine (at protein level).

It localises to the secreted. Its function is as follows. This peptide hormone induces gall bladder contraction and the release of pancreatic enzymes in the gut. Its function in the brain is not clear. Binding to CCK-A receptors stimulates amylase release from the pancreas, binding to CCK-B receptors stimulates gastric acid secretion. The polypeptide is Cholecystokinin (CCK) (Homo sapiens (Human)).